The sequence spans 261 residues: Ribosomal RNA small subunit methyltransferase A (261 aa).

Positions 13, 15, 40, 61, 85, and 105 each coordinate S-adenosyl-L-methionine.

Belongs to the class I-like SAM-binding methyltransferase superfamily. rRNA adenine N(6)-methyltransferase family. RsmA subfamily.

Its subcellular location is the cytoplasm. It carries out the reaction adenosine(1518)/adenosine(1519) in 16S rRNA + 4 S-adenosyl-L-methionine = N(6)-dimethyladenosine(1518)/N(6)-dimethyladenosine(1519) in 16S rRNA + 4 S-adenosyl-L-homocysteine + 4 H(+). In terms of biological role, specifically dimethylates two adjacent adenosines (A1518 and A1519) in the loop of a conserved hairpin near the 3'-end of 16S rRNA in the 30S particle. May play a critical role in biogenesis of 30S subunits. The chain is Ribosomal RNA small subunit methyltransferase A from Flavobacterium johnsoniae (strain ATCC 17061 / DSM 2064 / JCM 8514 / BCRC 14874 / CCUG 350202 / NBRC 14942 / NCIMB 11054 / UW101) (Cytophaga johnsonae).